The following is a 311-amino-acid chain: Urease accessory protein UreD (311 aa).

The protein belongs to the UreD family. UreD, UreF and UreG form a complex that acts as a GTP-hydrolysis-dependent molecular chaperone, activating the urease apoprotein by helping to assemble the nickel containing metallocenter of UreC. The UreE protein probably delivers the nickel.

Its subcellular location is the cytoplasm. Its function is as follows. Required for maturation of urease via the functional incorporation of the urease nickel metallocenter. In Parasynechococcus marenigrum (strain WH8102), this protein is Urease accessory protein UreD.